A 37-amino-acid chain; its full sequence is Diptericin (37 aa).

Residues 1–37 (DLHIPPPDNKINWPQLSGGGGGSPKTGYDININAQQK) form a disordered region.

It belongs to the attacin/sarcotoxin-2 family. As to expression, synthesized by the fat body and secreted into the hemolymph.

It localises to the secreted. Its function is as follows. Acute phase protein with antibacterial activity against the Gram-negative bacteria E.coli (MIC=6.25 ug/ml) and S.sonnei (MIC=12.5 ug/ml). Lacks antibacterial activity against the Gram-negative bacteria P.vulgaris, P.rettgeri and P.aeruginosa, and against the Gram-positive bacteria B.subtilis, S.aureus, M.luteus, B.megaterium, C.bovis and E.cloacae. The chain is Diptericin from Sarcophaga peregrina (Flesh fly).